The chain runs to 145 residues: Selenoprotein M (145 aa).

The first 23 residues, 1–23 (MSLLLPPLALLLLLAALVAPATA), serve as a signal peptide directing secretion. Active-site nucleophile residues include Cys-45 and Sec-48. The segment at residues 45–48 (CGGU) is a cross-link (cysteinyl-selenocysteine (Cys-Sec)). A non-standard amino acid (selenocysteine) is located at residue Sec-48.

Belongs to the selenoprotein M/F family. As to expression, widely expressed.

The protein localises to the cytoplasm. Its subcellular location is the perinuclear region. It localises to the endoplasmic reticulum. The protein resides in the golgi apparatus. Its function is as follows. May function as a thiol-disulfide oxidoreductase that participates in disulfide bond formation. This is Selenoprotein M from Homo sapiens (Human).